Here is an 82-residue protein sequence, read N- to C-terminus: Precursor of CEP3 (82 aa).

A signal peptide spans 1-24 (MATINVYVFAFIFLLTISVGSIEG). Residues 25 to 63 (RKLTKFTVTTSEEIRAGGSVLSSSPPTEPLESPPSHGVD) constitute a propeptide that is removed on maturation. A disordered region spans residues 40–82 (AGGSVLSSSPPTEPLESPPSHGVDTFRPTEPGHSPGIGHSVHN). A hydroxyproline mark is found at proline 67, proline 70, and proline 74. The propeptide occupies 79–82 (SVHN).

It belongs to the C-terminally encoded plant signaling peptide (CEP) family. Interacts with the CEP receptor CEPR1. The mature small signaling peptide is generated by proteolytic processing of the longer precursor. As to expression, mostly expressed in roots. Present in lateral roots (especially in vasculature), root-hypocotyl junction and cotyledons.

Its subcellular location is the secreted. It localises to the extracellular space. The protein localises to the apoplast. Its function is as follows. Extracellular signaling peptide that represses primary root growth rate and significantly inhibits lateral root formation. Promotes shoot growth. Modulates leaf morphology. Regulates systemic nitrogen (N)-demand signaling. Mediates systemic up-regulation of genes involved in N uptake and assimilation pathways. The polypeptide is Precursor of CEP3 (Arabidopsis thaliana (Mouse-ear cress)).